The following is a 196-amino-acid chain: Probable malonic semialdehyde reductase RutE (196 aa).

This sequence belongs to the nitroreductase family. HadB/RutE subfamily. FMN serves as cofactor.

The enzyme catalyses 3-hydroxypropanoate + NADP(+) = 3-oxopropanoate + NADPH + H(+). Functionally, may reduce toxic product malonic semialdehyde to 3-hydroxypropionic acid, which is excreted. This Shigella sonnei (strain Ss046) protein is Probable malonic semialdehyde reductase RutE.